The following is a 503-amino-acid chain: Aromatase (503 aa).

C437 provides a ligand contact to heme.

The protein belongs to the cytochrome P450 family. Requires heme as cofactor.

It is found in the membrane. The catalysed reaction is testosterone + 3 reduced [NADPH--hemoprotein reductase] + 3 O2 = 17beta-estradiol + formate + 3 oxidized [NADPH--hemoprotein reductase] + 4 H2O + 4 H(+). The enzyme catalyses androst-4-ene-3,17-dione + 3 reduced [NADPH--hemoprotein reductase] + 3 O2 = estrone + formate + 3 oxidized [NADPH--hemoprotein reductase] + 4 H2O + 4 H(+). Its function is as follows. Catalyzes the formation of aromatic C18 estrogens from C19 androgens. This Oryctolagus cuniculus (Rabbit) protein is Aromatase (CYP19A1).